Consider the following 722-residue polypeptide: Disintegrin and metalloproteinase domain-containing protein 21 (722 aa).

The first 31 residues, 1–31, serve as a signal peptide directing secretion; that stretch reads MAVDGTLVYIRVTLLLLWLGVFLSISGYCQA. Residues 32-196 constitute a propeptide that is removed on maturation; that stretch reads GPSQHFTSPE…FEEAENSALE (165 aa). A glycan (N-linked (GlcNAc...) asparagine) is linked at asparagine 164. The Cysteine switch signature appears at 171–178; sequence MRCGLTEK. Residue cysteine 173 coordinates Zn(2+). Residues 197-681 are Extracellular-facing; the sequence is PKSAGDWWTH…DSGPASAKRG (485 aa). Positions 208-398 constitute a Peptidase M12B domain; that stretch reads WFLELVVVVN…NQGSCLHNPP (191 aa). An N-linked (GlcNAc...) asparagine glycan is attached at asparagine 227. Intrachain disulfides connect cysteine 316–cysteine 393, cysteine 356–cysteine 378, and cysteine 358–cysteine 363. Residue histidine 341 coordinates Zn(2+). Residue glutamate 342 is part of the active site. 2 residues coordinate Zn(2+): histidine 345 and histidine 351. N-linked (GlcNAc...) asparagine glycans are attached at residues asparagine 377, asparagine 437, asparagine 478, asparagine 546, and asparagine 600. Positions 406–492 constitute a Disintegrin domain; sequence LKRCGNGVVE…QCPEDRYVQD (87 aa). Cysteine 464 and cysteine 484 are joined by a disulfide. 3 disulfide bridges follow: cysteine 634–cysteine 645, cysteine 639–cysteine 651, and cysteine 653–cysteine 662. Residues 634-663 form the EGF-like domain; it reads CLPETCNMKGICNNKHHCHCGYGWSPPYCQ. The chain crosses the membrane as a helical span at residues 682-702; the sequence is VFLPLIVIPSLSVLTFLFTVG. Over 703-722 the chain is Cytoplasmic; that stretch reads LLMYLRQCSGPKETKAHSSG.

It depends on Zn(2+) as a cofactor. Post-translationally, has no obvious cleavage site for furin endopeptidase, suggesting that the proteolytic processing is regulated.

The protein resides in the membrane. May be involved in sperm maturation and/or fertilization. May also be involved in epithelia functions associated with establishing and maintaining gradients of ions or nutrients. The polypeptide is Disintegrin and metalloproteinase domain-containing protein 21 (ADAM21) (Homo sapiens (Human)).